Reading from the N-terminus, the 183-residue chain is MASPSKRREMDMMKLMMSDYKVDTVNDDLQMFYVTFHGPTDSLYQGGVWKIKVELPEAYPYKSPSVGFVNKIYHPNVDESSGAVCLDVINQTWSPMFDLINVFESFLPQLLLYPNPSDPFNGEAASLLMRDRAAYELKVKEYCEKYAKPEEILSDDDDDDSMSEDGSDSDDDDDDEIVGKADP.

A UBC core domain is found at methionine 1–lysine 148. The active-site Glycyl thioester intermediate is cysteine 85. The disordered stretch occupies residues lysine 148–proline 183. A compositionally biased stretch (acidic residues) spans isoleucine 152 to glutamate 176.

This sequence belongs to the ubiquitin-conjugating enzyme family. In terms of tissue distribution, expressed in roots, petals, sepals and silique walls.

It catalyses the reaction S-ubiquitinyl-[E1 ubiquitin-activating enzyme]-L-cysteine + [E2 ubiquitin-conjugating enzyme]-L-cysteine = [E1 ubiquitin-activating enzyme]-L-cysteine + S-ubiquitinyl-[E2 ubiquitin-conjugating enzyme]-L-cysteine.. Its pathway is protein modification; protein ubiquitination. Its function is as follows. Accepts the ubiquitin from the E1 complex and catalyzes its covalent attachment to other proteins. The sequence is that of Ubiquitin-conjugating enzyme E2 6 (UBC6) from Arabidopsis thaliana (Mouse-ear cress).